Reading from the N-terminus, the 180-residue chain is Putative adenylate kinase (180 aa).

The ATP site is built by Gly10, Gly12, Lys13, Thr14, and Thr15. The segment at 30–50 is NMP; that stretch reads SVKELALSRGIGERVSDEIEI. The tract at residues 99-109 is LID; the sequence is ARGYSKKKLAE. Positions 100 and 138 each coordinate ATP.

It belongs to the adenylate kinase family. AK6 subfamily. As to quaternary structure, interacts with uS11. Not a structural component of 40S pre-ribosomes, but transiently interacts with them by binding to uS11.

It carries out the reaction AMP + ATP = 2 ADP. The catalysed reaction is ATP + H2O = ADP + phosphate + H(+). Broad-specificity nucleoside monophosphate (NMP) kinase that catalyzes the reversible transfer of the terminal phosphate group between nucleoside triphosphates and monophosphates. Also has ATPase activity. Involved in the late maturation steps of the 30S ribosomal particles, specifically 16S rRNA maturation. While NMP activity is not required for ribosome maturation, ATPase activity is. Associates transiently with small ribosomal subunit protein uS11. ATP hydrolysis breaks the interaction with uS11. May temporarily remove uS11 from the ribosome to enable a conformational change of the ribosomal RNA that is needed for the final maturation step of the small ribosomal subunit. This chain is Putative adenylate kinase, found in Thermococcus onnurineus (strain NA1).